The following is a 232-amino-acid chain: Ribonuclease P protein component 3 (232 aa).

It belongs to the eukaryotic/archaeal RNase P protein component 3 family. As to quaternary structure, consists of a catalytic RNA component and at least 4-5 protein subunits.

The protein localises to the cytoplasm. The catalysed reaction is Endonucleolytic cleavage of RNA, removing 5'-extranucleotides from tRNA precursor.. Part of ribonuclease P, a protein complex that generates mature tRNA molecules by cleaving their 5'-ends. In Methanococcus maripaludis (strain C6 / ATCC BAA-1332), this protein is Ribonuclease P protein component 3.